Reading from the N-terminus, the 227-residue chain is 2-C-methyl-D-erythritol 4-phosphate cytidylyltransferase (227 aa).

The protein belongs to the IspD/TarI cytidylyltransferase family. IspD subfamily.

It catalyses the reaction 2-C-methyl-D-erythritol 4-phosphate + CTP + H(+) = 4-CDP-2-C-methyl-D-erythritol + diphosphate. The protein operates within isoprenoid biosynthesis; isopentenyl diphosphate biosynthesis via DXP pathway; isopentenyl diphosphate from 1-deoxy-D-xylulose 5-phosphate: step 2/6. Functionally, catalyzes the formation of 4-diphosphocytidyl-2-C-methyl-D-erythritol from CTP and 2-C-methyl-D-erythritol 4-phosphate (MEP). The protein is 2-C-methyl-D-erythritol 4-phosphate cytidylyltransferase of Lachnospira eligens (strain ATCC 27750 / DSM 3376 / VPI C15-48 / C15-B4) (Eubacterium eligens).